The following is a 262-amino-acid chain: MSGGGNTITAVGGGGGGCGGGGSSGGGGSSGGGGGGPCGACKFLRRKCVPGCIFAPYFDSEQGSAYFAAVHKVFGASNVSKLLLHIPVHRRSDAVVTICYEAQARIRDPIYGCVAHIFALQQQVVNLQAEVSYLQAHLASLELPQPQTRPQPMPQPQPLFFTPPPPLAITDLPASVSPLPSTYDLASIFDQTTSSSAWATQQRRFIDPRHQYGVSSSSSSVAVGLGGENSHDLQALAHELLHRQGSPPPAATDHSPSRTMSR.

Positions 36–138 constitute an LOB domain; the sequence is GPCGACKFLR…AEVSYLQAHL (103 aa). Residues 223-262 are disordered; that stretch reads VGLGGENSHDLQALAHELLHRQGSPPPAATDHSPSRTMSR.

The protein belongs to the LOB domain-containing protein family. Homodimer and heterodimer with LBD16. Interacts with GIP1. Expressed in roots, stems, leaves and flowers. Expressed in vascular tissues of hypocotyls, leaves, roots, developing floral organs and siliques.

It is found in the nucleus. Functionally, involved in the positive regulation of tracheary element (TE) differentiation. Involved in a positive feedback loop that maintains or promotes NAC030/VND7 expression that regulates TE differentiation-related genes. Functions in the initiation and emergence of lateral roots, in conjunction with LBD16, downstream of ARF7 and ARF19. Transcriptional activator that directly regulates EXPA14, a gene encoding a cell wall-loosening factor that promotes lateral root emergence. Activates EXPA14 by directly binding to a specific region of its promoter. Transcriptional activator that directly regulates EXPA17, a gene encoding a cell wall-loosening factor that promotes lateral root emergence. Acts downstream of the auxin influx carriers AUX1 and LAX1 in the regulation of lateral root initiation and development. In Arabidopsis thaliana (Mouse-ear cress), this protein is LOB domain-containing protein 18 (LBD18).